Here is a 236-residue protein sequence, read N- to C-terminus: Pyridoxal 5'-phosphate synthase subunit PdxT (236 aa).

61-63 contributes to the L-glutamine binding site; that stretch reads GES. Residue cysteine 93 is the Nucleophile of the active site. L-glutamine-binding positions include arginine 127 and 163–164; that span reads IR. Catalysis depends on charge relay system residues histidine 215 and glutamate 217.

This sequence belongs to the glutaminase PdxT/SNO family. In the presence of PdxS, forms a dodecamer of heterodimers. Only shows activity in the heterodimer.

It catalyses the reaction aldehydo-D-ribose 5-phosphate + D-glyceraldehyde 3-phosphate + L-glutamine = pyridoxal 5'-phosphate + L-glutamate + phosphate + 3 H2O + H(+). The catalysed reaction is L-glutamine + H2O = L-glutamate + NH4(+). It functions in the pathway cofactor biosynthesis; pyridoxal 5'-phosphate biosynthesis. Its function is as follows. Catalyzes the hydrolysis of glutamine to glutamate and ammonia as part of the biosynthesis of pyridoxal 5'-phosphate. The resulting ammonia molecule is channeled to the active site of PdxS. The chain is Pyridoxal 5'-phosphate synthase subunit PdxT from Arthrobacter sp. (strain FB24).